The sequence spans 115 residues: Probable 4-amino-4-deoxy-L-arabinose-phosphoundecaprenol flippase subunit ArnE (115 aa).

A run of 3 helical transmembrane segments spans residues 42-62 (PWPWLALLALGLGLACWLLLL), 65-85 (VEVGSAYPMLALNFVLVTLVA), and 93-112 (VDRRHLAGLLLIVAGVALLG). The EamA domain occupies 46-113 (LALLALGLGL…IVAGVALLGR (68 aa)).

It belongs to the ArnE family. As to quaternary structure, heterodimer of ArnE and ArnF.

Its subcellular location is the cell inner membrane. It functions in the pathway bacterial outer membrane biogenesis; lipopolysaccharide biosynthesis. Functionally, translocates 4-amino-4-deoxy-L-arabinose-phosphoundecaprenol (alpha-L-Ara4N-phosphoundecaprenol) from the cytoplasmic to the periplasmic side of the inner membrane. In Pseudomonas paraeruginosa (strain DSM 24068 / PA7) (Pseudomonas aeruginosa (strain PA7)), this protein is Probable 4-amino-4-deoxy-L-arabinose-phosphoundecaprenol flippase subunit ArnE.